The chain runs to 434 residues: MPLKSLKNRLNQHFDLSPRYGSVKKIMPNIVYADGFNPSVGDVVKIEKSDGSECVGMVVVAEKEQFGFTPFNFIEGARAGDKVLFLKEGLNFPVGRNLLGRVLNPLGQVIDNKGALDYERLAPVITTPIAPLKRGLIDEIFSVGVKSIDGLLTCGKGQKLGIFAGSGVGKSTLMGMITRGCLAPIKVIALIGERGREIPEFIEKNLKGDLSSCVLVVATSDDSPLMRKYGAFCAMSVAEYFKNQGLDVLFIMDSVTRFAMAQREIGLALGEPPTSKGYPPSALSLLPQLMERAGKEENKGSITAFFSVLVEGDDLSDPIADQTRSILDGHIVLSRELTDYGIYPPINILNSASRVAKDIISESQNLCARKFRRLYALLKENEMLIRIGSYQMGNDKELDEAIKKKALMEQFLAQDENALQPFETSFQQLEEILR.

164-171 (AGSGVGKS) contacts ATP.

The protein belongs to the ATPase alpha/beta chains family.

The protein localises to the cytoplasm. It catalyses the reaction ATP + H2O + 4 H(+)(in) = ADP + phosphate + 5 H(+)(out). Functionally, probable catalytic subunit of a protein translocase for flagellum-specific export, or a proton translocase involved in local circuits at the flagellum. This Helicobacter pylori (strain ATCC 700392 / 26695) (Campylobacter pylori) protein is Flagellum-specific ATP synthase (fliI).